The chain runs to 282 residues: Para-Rep C2 (282 aa).

The region spanning 1–99 (MASKRWCFTL…ETLIAEIGAP (99 aa)) is the CRESS-DNA virus Rep endonuclease domain. The RCR-1 signature appears at 7–10 (CFTL). Residues Glu38 and His47 each coordinate a divalent metal cation. Positions 47–49 (HLQ) match the RCR-2 motif. The Nuclear localization signal signature appears at 56–77 (KLIRLGGLKKKFGSIAHWEIAK). Residue Tyr86 is the For DNA cleavage activity of the active site. The short motif at 86–89 (YCTK) is the RCR-3 element. Positions 99 to 105 (PVKKGSN) match the Nuclear localization signal motif. 174 to 182 (GPDGGEGKS) contributes to the ATP binding site.

The protein belongs to the nanoviridea/circoviridae replication-associated protein family. As to quaternary structure, homooligomer (Potential). Rep binds to repeated DNA motifs (iterons). Mg(2+) is required as a cofactor. The cofactor is Mn(2+).

The protein localises to the host nucleus. The catalysed reaction is ATP + H2O = ADP + phosphate + H(+). In terms of biological role, initiates and terminates the replication only of its own subviral DNA molecule. The closed circular ssDNA genome is first converted to a superhelical dsDNA. Rep binds a specific hairpin at the genome origin of replication. Introduces an endonucleolytic nick within the intergenic region of the genome, thereby initiating the rolling circle replication (RCR). Following cleavage, binds covalently to the 5'-phosphate of DNA as a tyrosyl ester. The cleavage gives rise to a free 3'-OH that serves as a primer for the cellular DNA polymerase. The polymerase synthesizes the (+) strand DNA by rolling circle mechanism. After one round of replication, a Rep-catalyzed nucleotidyl transfer reaction releases a circular single-stranded virus genome, thereby terminating the replication. Displays origin-specific DNA cleavage, nucleotidyl transferase, ATPase and helicase activities. The protein is Para-Rep C2 (C2) of Milk vetch dwarf C2 alphasatellite (MVDC2A).